Here is a 523-residue protein sequence, read N- to C-terminus: Transcription initiation factor TFIID subunit 4 (523 aa).

Disordered stretches follow at residues 1–100 (MSLP…AASD) and 185–241 (ASVE…VQGG). A compositionally biased stretch (low complexity) spans 58–77 (QMQPPRQPIQQQMQHFQSPS). Over residues 78–87 (PMAPQGPPGT) the composition is skewed to pro residues. The region spanning 101-199 (DKNVTKCVRF…VNPPPGYVFN (99 aa)) is the TAFH domain. Positions 204–213 (PGPPQPPPPQ) are enriched in pro residues. The span at 214 to 236 (QQSQQQPPLEMRQIPNPNQIPPQ) shows a compositional bias: low complexity. A histone-fold region spans residues 329–383 (LKPDEVLNRITKRMMSSCSVEEEALVAISDAVESHLRELITLMAGVAEHRVESLR). The tract at residues 333 to 382 (EVLNRITKRMMSSCSVEEEALVAISDAVESHLRELITLMAGVAEHRVESL) is necessary and sufficient for interaction with oma-1. The disordered stretch occupies residues 407–435 (QEEELRESREKESLIRMSKNKNSGKETIE).

Belongs to the TAF4 family. As to quaternary structure, component of the TFIID basal transcription factor complex, composed of TATA-box-binding protein tbp-1, and a number of TBP-associated factors (TAFs). Interacts (via histone-fold domain) with oma-1 (via histone-fold domain). May also interact with oma-2. Interacts (via histone-fold domain) with taf-12 (via the histone-fold domain).

It is found in the nucleus. The protein resides in the cytoplasm. In terms of biological role, the TFIID basal transcription factor complex plays a major role in the initiation of RNA polymerase II (Pol II)-dependent transcription. TFIID recognizes and binds promoters via its subunit tbp-1, a TATA-box-binding protein, and promotes assembly of the pre-initiation complex (PIC). The TFIID complex consists of tbp-1 and TBP-associated factors (TAFs), including taf-4. Essential for early embryonic development, probably acting via activating transcription initiation by RNA polymerase II, as part of the TFIID complex. In early embryos, but not oocytes, remains, presumably inactive, in the cytoplasm as a result of binding to oma-1. Upon degradation of oma-1, taf-4 is released and bound by taf-12, and the taf-4/12 heterodimer translocates to the nucleus and transcriptional repression is relieved. Involved in lifespan extension in a manner dependent upon mitochondrial function. Plays a role in modulating polyribosome formation. The chain is Transcription initiation factor TFIID subunit 4 from Caenorhabditis elegans.